The sequence spans 265 residues: MQIRQSVKLKKPLIHYITNPISINDCANIILAAGAKPIMAEHPLEVSEITSVSKSLGVNLGNITDNKMKSMLISGKTAYENKIPQVIDLVGVGCSKLRLDYAKKFILECHPNVIKGNMSEIKAIYGIKSSAKGIDVGACDIITEQNFDENIEMIKRLSMETGSVVAATGVVDIISNGTYTYIISNGCEMLSMITGTGCMLTGIIASYISSGNILEGTALAIVLMGICGELSQHVKGTGSFRNELIDNIFSISDDIIIKKIRINSY.

M39 lines the substrate pocket. ATP contacts are provided by K115 and T168. G195 is a binding site for substrate.

The protein belongs to the Thz kinase family. Mg(2+) is required as a cofactor.

It catalyses the reaction 5-(2-hydroxyethyl)-4-methylthiazole + ATP = 4-methyl-5-(2-phosphooxyethyl)-thiazole + ADP + H(+). It participates in cofactor biosynthesis; thiamine diphosphate biosynthesis; 4-methyl-5-(2-phosphoethyl)-thiazole from 5-(2-hydroxyethyl)-4-methylthiazole: step 1/1. Its function is as follows. Catalyzes the phosphorylation of the hydroxyl group of 4-methyl-5-beta-hydroxyethylthiazole (THZ). This chain is Hydroxyethylthiazole kinase 2, found in Clostridium botulinum (strain Okra / Type B1).